The primary structure comprises 344 residues: L-rhamnose-proton symporter (344 aa).

10 helical membrane passes run 4–24 (AITMGIFWHLIGAASAACFYA), 38–58 (WSVGGIVSWIILPWAISALLL), 68–88 (FSLSTLLPVFLFGAMWGIGNI), 101–121 (MGIGIAIGITLIVGTLMTPII), 137–157 (TLLGVLVALIGVGIVTRAGQL), 175–195 (LVLAVMCGIFSAGMSFAMNAA), 214–234 (LPSYVIIMGGGAIINLGFCFI), 259–279 (VLLSALGGLMWYLQFFFYAWG), 290–310 (ISWMLHMSFYVLCGGIVGLVL), and 323–343 (VLSLGCVVIIVAANIVGIGMA).

It belongs to the L-rhamnose transporter (TC 2.A.7.6) family.

It localises to the cell inner membrane. The enzyme catalyses L-rhamnopyranose(in) + H(+)(in) = L-rhamnopyranose(out) + H(+)(out). Its function is as follows. Uptake of L-rhamnose across the cytoplasmic membrane with the concomitant transport of protons into the cell (symport system). This Escherichia coli (strain 55989 / EAEC) protein is L-rhamnose-proton symporter.